Consider the following 615-residue polypeptide: 1-deoxy-D-xylulose-5-phosphate synthase (615 aa).

Residues H72 and 111 to 113 (GHS) contribute to the thiamine diphosphate site. Residue D142 coordinates Mg(2+). Thiamine diphosphate is bound by residues 143-144 (GA), N171, Y278, and E360. N171 contacts Mg(2+).

Belongs to the transketolase family. DXPS subfamily. In terms of assembly, homodimer. Mg(2+) serves as cofactor. Requires thiamine diphosphate as cofactor.

The enzyme catalyses D-glyceraldehyde 3-phosphate + pyruvate + H(+) = 1-deoxy-D-xylulose 5-phosphate + CO2. The protein operates within metabolic intermediate biosynthesis; 1-deoxy-D-xylulose 5-phosphate biosynthesis; 1-deoxy-D-xylulose 5-phosphate from D-glyceraldehyde 3-phosphate and pyruvate: step 1/1. Catalyzes the acyloin condensation reaction between C atoms 2 and 3 of pyruvate and glyceraldehyde 3-phosphate to yield 1-deoxy-D-xylulose-5-phosphate (DXP). In Campylobacter jejuni subsp. jejuni serotype O:6 (strain 81116 / NCTC 11828), this protein is 1-deoxy-D-xylulose-5-phosphate synthase.